Reading from the N-terminus, the 235-residue chain is Purine nucleoside phosphorylase DeoD-type (235 aa).

His4 lines the a purine D-ribonucleoside pocket. Residues Gly20, Arg24, Arg43, and 87–90 contribute to the phosphate site; that span reads RVGT. Residues 179–181 and 203–204 contribute to the a purine D-ribonucleoside site; these read EME and SD. Asp204 acts as the Proton donor in catalysis.

Belongs to the PNP/UDP phosphorylase family. In terms of assembly, homohexamer; trimer of homodimers.

It catalyses the reaction a purine D-ribonucleoside + phosphate = a purine nucleobase + alpha-D-ribose 1-phosphate. The enzyme catalyses a purine 2'-deoxy-D-ribonucleoside + phosphate = a purine nucleobase + 2-deoxy-alpha-D-ribose 1-phosphate. Functionally, catalyzes the reversible phosphorolytic breakdown of the N-glycosidic bond in the beta-(deoxy)ribonucleoside molecules, with the formation of the corresponding free purine bases and pentose-1-phosphate. The sequence is that of Purine nucleoside phosphorylase DeoD-type from Clostridium perfringens (strain SM101 / Type A).